A 319-amino-acid chain; its full sequence is F-box only protein 8 (319 aa).

The F-box domain occupies 68–111; that stretch reads FINLEMLPPELSFTILSYLNATDLCLASCVWQDLANDELLWQGL. Residues 146-276 enclose the SEC7 domain; sequence FNANPEEGVS…LILLSIDLTS (131 aa).

As to expression, high expression in brain, heart, kidney, liver, lung, skeletal muscle, testis, and day-7 embryos.

May promote guanine-nucleotide exchange on an ARF. Promotes the activation of ARF through replacement of GDP with GTP (Potential). This chain is F-box only protein 8 (Fbxo8), found in Mus musculus (Mouse).